The sequence spans 505 residues: Zinc finger protein 649 (505 aa).

Positions 8-79 (LTLEDVAVDF…EDEIHSPAHP (72 aa)) constitute a KRAB domain. A Glycyl lysine isopeptide (Lys-Gly) (interchain with G-Cter in SUMO2) cross-link involves residue Lys-112. 10 C2H2-type zinc fingers span residues 178 to 200 (HECT…KRIH), 206 to 228 (HVCS…ERAH), 234 to 256 (HGCS…ERAH), 262 to 284 (YGCS…QRIH), 290 to 312 (HQCS…QRTH), 318 to 340 (HTCS…QRTH), 346 to 368 (YGCI…QRYH), 374 to 396 (FVCP…QKIH), 402 to 424 (YKCS…HRTH), and 430 to 452 (YGCD…KRIH). A disordered region spans residues 455–481 (EKRGDSVKVENPSTASHSLSPSEHVQG). Polar residues predominate over residues 465–477 (NPSTASHSLSPSE).

Belongs to the krueppel C2H2-type zinc-finger protein family. Highly expressed in heart, skeletal muscle, and brain. Lower expression in liver, lung, kidney, pancreas and placenta.

It is found in the nucleus. Transcriptional repressor. Regulator of transcriptional factor complexes and may suppress SRE and AP-1 transcription activities mediated by growth factor signaling pathways. In Homo sapiens (Human), this protein is Zinc finger protein 649 (ZNF649).